Reading from the N-terminus, the 499-residue chain is Interleukin-17 receptor B (499 aa).

Residues methionine 1–proline 17 form the signal peptide. At arginine 18–glycine 286 the chain is on the extracellular side. 4 N-linked (GlcNAc...) asparagine glycosylation sites follow: asparagine 67, asparagine 103, asparagine 156, and asparagine 197. The chain crosses the membrane as a helical span at residues tryptophan 287–leucine 307. The Cytoplasmic segment spans residues threonine 308–leucine 499. The SEFIR domain occupies leucine 328–threonine 474.

In terms of assembly, interacts with DAZAP2. Interacts with TRAF3IP2. Liver and testis. Expressed at lower level in kidney and lung. Expressed in selected T-cell, B-cell and myeloid cell lines.

The protein resides in the cell membrane. It localises to the secreted. Its function is as follows. Receptor for the pro-inflammatory cytokines IL17B and IL17E. May play a role in controlling the growth and/or differentiation of hematopoietic cells. The polypeptide is Interleukin-17 receptor B (Il17rb) (Mus musculus (Mouse)).